Here is a 550-residue protein sequence, read N- to C-terminus: Lariat debranching enzyme (550 aa).

Cys-8 and His-10 together coordinate a divalent metal cation. Ser-28 carries the post-translational modification Phosphoserine. Asp-39 and Asn-84 together coordinate a divalent metal cation. The segment at 124–154 is lariat recognition loop; sequence SGIFKSHDYRKGHFECPPYNSSTIRSIYHVR. N6-acetyllysine is present on Lys-128. The a divalent metal cation site is built by His-174, His-226, and His-228. Residues 390–550 are disordered; sequence EHHQCGEYEQ…AVDDGDASAE (161 aa). A compositionally biased stretch (polar residues) spans 416-426; that stretch reads NTDTSALSSIN. Positions 430–445 are enriched in acidic residues; that stretch reads IMLDEEEEEEEEEEEA. A compositionally biased stretch (polar residues) spans 450 to 483; the sequence is SDMNTPSVEPASDQASDLSTSFSDIRNLPSSMFV. Phosphoserine is present on residues Ser-470, Ser-480, Ser-484, Ser-485, Ser-489, Ser-491, Ser-494, Ser-505, and Ser-520. Residues 498 to 528 show a composition bias toward basic and acidic residues; it reads KCGETVESGDEKDLAKFPLKRLSDEHEPEQR.

This sequence belongs to the lariat debranching enzyme family. Requires Fe(2+) as cofactor. The cofactor is Zn(2+). Mn(2+) is required as a cofactor.

It localises to the nucleus. With respect to regulation, active in presence of diverse metals including Fe(2+), Zn(2+), Mn(2+). Also activated by Ca(2+). Binds two metal cations in two adjacent alpha and beta metal-binding pockets. In terms of biological role, cleaves the 2'-5' phosphodiester linkage at the branch point of excised lariat intron RNA and converts them into linear molecules that can be subsequently degraded, thereby facilitating ribonucleotide turnover. Linked to its role in pre-mRNA processing mechanism, may also participate in retrovirus replication and have an antiviral cell-intrinsic defense function. The protein is Lariat debranching enzyme (Dbr1) of Mus musculus (Mouse).